Reading from the N-terminus, the 319-residue chain is Phospho-N-acetylmuramoyl-pentapeptide-transferase (319 aa).

10 consecutive transmembrane segments (helical) span residues 1–21 (MSILVAGLTLVSAFLITFLLM), 53–73 (TMGGLLFILSAALTCGWVGAW), 77–97 (LNGTLGALLFTLIAYGLIGMW), 117–137 (FLAQVVGAMVFAVIYQHEGFQ), 140–160 (FGLTDWGWFYALFIIFWMVGF), 172–192 (GLVTGLATISFAAYLVLALVQ), 195–215 (TEVALFCLAMIGTLLGFFPFN), 221–241 (IFMGDMGSLALGASLAAVALV), 249–269 (LIIGIVYVLETLSVILQVAYF), and 298–318 (GVFWLVGLIAGALTVATILFL).

Belongs to the glycosyltransferase 4 family. MraY subfamily. It depends on Mg(2+) as a cofactor.

Its subcellular location is the cell membrane. The catalysed reaction is UDP-N-acetyl-alpha-D-muramoyl-L-alanyl-gamma-D-glutamyl-L-lysyl-D-alanyl-D-alanine + di-trans,octa-cis-undecaprenyl phosphate = Mur2Ac(oyl-L-Ala-gamma-D-Glu-L-Lys-D-Ala-D-Ala)-di-trans,octa-cis-undecaprenyl diphosphate + UMP. The protein operates within cell wall biogenesis; peptidoglycan biosynthesis. Its function is as follows. Catalyzes the initial step of the lipid cycle reactions in the biosynthesis of the cell wall peptidoglycan: transfers peptidoglycan precursor phospho-MurNAc-pentapeptide from UDP-MurNAc-pentapeptide onto the lipid carrier undecaprenyl phosphate, yielding undecaprenyl-pyrophosphoryl-MurNAc-pentapeptide, known as lipid I. This is Phospho-N-acetylmuramoyl-pentapeptide-transferase from Limosilactobacillus fermentum (strain NBRC 3956 / LMG 18251) (Lactobacillus fermentum).